The chain runs to 377 residues: Flap endonuclease 1 (377 aa).

Residues 1 to 105 (MGIKGLSQVI…GELAKRASRQ (105 aa)) are N-domain. Aspartate 34 is a Mg(2+) binding site. Arginine 47 and arginine 71 together coordinate DNA. Aspartate 87 is a Mg(2+) binding site. Residues 96 to 115 (GELAKRASRQQKAREEREEA) form a disordered region. An I-domain region spans residues 123-254 (MVDKFAKRTV…ARAVELIRQH (132 aa)). Residues glutamate 159, glutamate 161, aspartate 180, and aspartate 182 each contribute to the Mg(2+) site. DNA is bound at residue glutamate 159. Residues glycine 232 and aspartate 234 each contribute to the DNA site. Aspartate 234 contributes to the Mg(2+) binding site. The interaction with PCNA stretch occupies residues 337-345 (PQGRLDSFF). Residues 350 to 377 (STKKEKEKPKAAAKRKRDTKSSAPKKKR) are disordered. The segment covering 360–377 (AAAKRKRDTKSSAPKKKR) has biased composition (basic residues).

Belongs to the XPG/RAD2 endonuclease family. FEN1 subfamily. Interacts with PCNA. Three molecules of rad2 bind to one PCNA trimer with each molecule binding to one PCNA monomer. PCNA stimulates the nuclease activity without altering cleavage specificity. Mg(2+) is required as a cofactor. In terms of processing, phosphorylated. Phosphorylation upon DNA damage induces relocalization to the nuclear plasma.

It localises to the nucleus. Its subcellular location is the nucleolus. It is found in the nucleoplasm. The protein localises to the mitochondrion. Functionally, structure-specific nuclease with 5'-flap endonuclease and 5'-3' exonuclease activities involved in DNA replication and repair. During DNA replication, cleaves the 5'-overhanging flap structure that is generated by displacement synthesis when DNA polymerase encounters the 5'-end of a downstream Okazaki fragment. It enters the flap from the 5'-end and then tracks to cleave the flap base, leaving a nick for ligation. Also involved in the long patch base excision repair (LP-BER) pathway, by cleaving within the apurinic/apyrimidinic (AP) site-terminated flap. Acts as a genome stabilization factor that prevents flaps from equilibrating into structures that lead to duplications and deletions. Also possesses 5'-3' exonuclease activity on nicked or gapped double-stranded DNA, and exhibits RNase H activity. Also involved in replication and repair of rDNA and in repairing mitochondrial DNA. The polypeptide is Flap endonuclease 1 (Schizosaccharomyces japonicus (strain yFS275 / FY16936) (Fission yeast)).